The following is a 130-amino-acid chain: Small ribosomal subunit protein uS11 (130 aa).

Belongs to the universal ribosomal protein uS11 family. In terms of assembly, part of the 30S ribosomal subunit. Interacts with proteins S7 and S18. Binds to IF-3.

Located on the platform of the 30S subunit, it bridges several disparate RNA helices of the 16S rRNA. Forms part of the Shine-Dalgarno cleft in the 70S ribosome. This chain is Small ribosomal subunit protein uS11, found in Parasynechococcus marenigrum (strain WH8102).